The primary structure comprises 231 residues: Lipoprotein-releasing system ATP-binding protein LolD (231 aa).

Positions 11–231 (LRLEGLTRRF…TLRDGKLVPF (221 aa)) constitute an ABC transporter domain. 47–54 (APSGTGKS) is an ATP binding site.

This sequence belongs to the ABC transporter superfamily. Lipoprotein translocase (TC 3.A.1.125) family. In terms of assembly, the complex is composed of two ATP-binding proteins (LolD) and two transmembrane proteins (LolC and LolE).

The protein resides in the cell inner membrane. Part of the ABC transporter complex LolCDE involved in the translocation of mature outer membrane-directed lipoproteins, from the inner membrane to the periplasmic chaperone, LolA. Responsible for the formation of the LolA-lipoprotein complex in an ATP-dependent manner. This chain is Lipoprotein-releasing system ATP-binding protein LolD, found in Gluconobacter oxydans (strain 621H) (Gluconobacter suboxydans).